The chain runs to 35 residues: Alpha-amanitin proprotein 1 (35 aa).

Positions 1–10 are excised as a propeptide; it reads MFDTNATRLP. Ile11 is modified ((3R,4R)-4,5-dihydroxyisoleucine; in form alpha-amanitin). Ile11 carries the (3R,4S)-4-hydroxyisoleucine; in form gamma-amanitin modification. A cross-link (cyclopeptide (Ile-Pro)) is located at residues 11 to 18; it reads IWGIGCNP. Residues 12-16 constitute a cross-link (2'-cysteinyl-6'-hydroxytryptophan sulfoxide (Trp-Cys)); the sequence is WGIGC. 4-hydroxyproline is present on Pro18. The propeptide occupies 19-35; that stretch reads WTAEHVDQTLASGNDIC.

The protein belongs to the MSDIN fungal toxin family. Processed by the macrocyclase-peptidase enzyme POPB to yield a toxic bicyclic octapeptide. POPB first removes 10 residues from the N-terminus. Conformational trapping of the remaining peptide forces the enzyme to release this intermediate rather than proceed to macrocyclization. The enzyme rebinds the remaining peptide in a different conformation and catalyzes macrocyclization of the N-terminal 8 residues.

Major toxin belonging to the bicyclic octapeptides amatoxins that acts by binding non-competitively to RNA polymerase II and greatly slowing the elongation of transcripts from target promoters. This is Alpha-amanitin proprotein 1 from Galerina marginata (strain CBS 339.88).